A 368-amino-acid chain; its full sequence is 2-aminoethylphosphonate--pyruvate transaminase (368 aa).

K192 carries the post-translational modification N6-(pyridoxal phosphate)lysine.

It belongs to the class-V pyridoxal-phosphate-dependent aminotransferase family. PhnW subfamily. As to quaternary structure, homodimer. It depends on pyridoxal 5'-phosphate as a cofactor.

It carries out the reaction (2-aminoethyl)phosphonate + pyruvate = phosphonoacetaldehyde + L-alanine. In terms of biological role, involved in phosphonate degradation. This Pseudomonas putida (strain ATCC 700007 / DSM 6899 / JCM 31910 / BCRC 17059 / LMG 24140 / F1) protein is 2-aminoethylphosphonate--pyruvate transaminase.